Consider the following 596-residue polypeptide: Transcription factor IIIB 70 kDa subunit (596 aa).

Residues M1–E33 form a TFIIB-type zinc finger. Positions 4, 7, 25, and 28 each coordinate Zn(2+). 2 repeat units span residues V90 to K166 and F185 to N264. 2 disordered regions span residues G363–G421 and I509–K534. A compositionally biased stretch (basic and acidic residues) spans N365 to T375. Phosphoserine is present on residues S381 and S384. The span at E388–G421 shows a compositional bias: basic and acidic residues. Over residues V516–N526 the composition is skewed to basic residues.

It belongs to the TFIIB family. In terms of assembly, TFIIIB comprises the TATA-binding protein (TBP), the B-related factor (BRF) and the B' component (TFC5).

Its subcellular location is the nucleus. Its function is as follows. General activator of RNA polymerase III transcription. Interacts with TBP. Binds to Pol III subunit C34 and to the TAU135 component of TFIIIC. The protein is Transcription factor IIIB 70 kDa subunit (BRF1) of Saccharomyces cerevisiae (strain ATCC 204508 / S288c) (Baker's yeast).